The sequence spans 255 residues: Imidazole glycerol phosphate synthase subunit HisF (255 aa).

Catalysis depends on residues D12 and D131.

It belongs to the HisA/HisF family. Heterodimer of HisH and HisF.

The protein resides in the cytoplasm. It catalyses the reaction 5-[(5-phospho-1-deoxy-D-ribulos-1-ylimino)methylamino]-1-(5-phospho-beta-D-ribosyl)imidazole-4-carboxamide + L-glutamine = D-erythro-1-(imidazol-4-yl)glycerol 3-phosphate + 5-amino-1-(5-phospho-beta-D-ribosyl)imidazole-4-carboxamide + L-glutamate + H(+). It participates in amino-acid biosynthesis; L-histidine biosynthesis; L-histidine from 5-phospho-alpha-D-ribose 1-diphosphate: step 5/9. In terms of biological role, IGPS catalyzes the conversion of PRFAR and glutamine to IGP, AICAR and glutamate. The HisF subunit catalyzes the cyclization activity that produces IGP and AICAR from PRFAR using the ammonia provided by the HisH subunit. The chain is Imidazole glycerol phosphate synthase subunit HisF from Sphingopyxis alaskensis (strain DSM 13593 / LMG 18877 / RB2256) (Sphingomonas alaskensis).